An 87-amino-acid polypeptide reads, in one-letter code: U9-ctenitoxin-Pn1a (87 aa).

The signal sequence occupies residues 1 to 22 (MWLKTQLFVLAIAVIALLEVHA). Positions 23 to 37 (EPESNDNNELVVEEA) are excised as a propeptide. Intrachain disulfides connect cysteine 40-cysteine 54, cysteine 47-cysteine 64, cysteine 53-cysteine 73, and cysteine 66-cysteine 71. A propeptide spanning residues 75–87 (KSLREMAAAAFGR) is cleaved from the precursor.

This sequence belongs to the neurotoxin 02 (plectoxin) family. 01 (Tx3) subfamily. Expressed by the venom gland.

It localises to the secreted. Functionally, antagonist of L-type calcium channels (Cav1/CACNA1). The polypeptide is U9-ctenitoxin-Pn1a (Phoneutria nigriventer (Brazilian armed spider)).